The primary structure comprises 371 residues: Putative glutamate--cysteine ligase 2 (371 aa).

The protein belongs to the glutamate--cysteine ligase type 2 family. YbdK subfamily.

The catalysed reaction is L-cysteine + L-glutamate + ATP = gamma-L-glutamyl-L-cysteine + ADP + phosphate + H(+). Its function is as follows. ATP-dependent carboxylate-amine ligase which exhibits weak glutamate--cysteine ligase activity. This is Putative glutamate--cysteine ligase 2 from Paraburkholderia xenovorans (strain LB400).